A 172-amino-acid chain; its full sequence is Adenine phosphoribosyltransferase (172 aa).

The protein belongs to the purine/pyrimidine phosphoribosyltransferase family. Homodimer.

The protein localises to the cytoplasm. The catalysed reaction is AMP + diphosphate = 5-phospho-alpha-D-ribose 1-diphosphate + adenine. The protein operates within purine metabolism; AMP biosynthesis via salvage pathway; AMP from adenine: step 1/1. In terms of biological role, catalyzes a salvage reaction resulting in the formation of AMP, that is energically less costly than de novo synthesis. The polypeptide is Adenine phosphoribosyltransferase (Anaeromyxobacter dehalogenans (strain 2CP-C)).